A 509-amino-acid polypeptide reads, in one-letter code: Cobyric acid synthase (509 aa).

In terms of domain architecture, GATase cobBQ-type spans 262–459; sequence EIKVGIIKLP…IHGIFENDSW (198 aa). The active-site Nucleophile is C343. H451 is an active-site residue.

This sequence belongs to the CobB/CobQ family. CobQ subfamily.

Its pathway is cofactor biosynthesis; adenosylcobalamin biosynthesis. Catalyzes amidations at positions B, D, E, and G on adenosylcobyrinic A,C-diamide. NH(2) groups are provided by glutamine, and one molecule of ATP is hydrogenolyzed for each amidation. The chain is Cobyric acid synthase from Prochlorococcus marinus (strain MIT 9215).